The following is a 282-amino-acid chain: Homeobox-leucine zipper protein HAT1 (282 aa).

The interval 71–134 (LEEETGVSSP…EEDYGGETCR (64 aa)) is disordered. Residues 76–89 (GVSSPNSTISSTVS) are compositionally biased toward low complexity. Residues 132 to 191 (TCRKKLRLSKDQSAVLEDTFKEHNTLNPKQKLALAKKLGLTARQVEVWFQNRRARTKLKQ) constitute a DNA-binding region (homeobox). Residues 199–220 (LKRCVEKLTEENRRLEKEAAEL) are leucine-zipper.

This sequence belongs to the HD-ZIP homeobox family. Class II subfamily. Interacts with BZIP30.

It localises to the nucleus. Its function is as follows. Probable transcription factor. The protein is Homeobox-leucine zipper protein HAT1 (HAT1) of Arabidopsis thaliana (Mouse-ear cress).